Here is a 167-residue protein sequence, read N- to C-terminus: uncharacterized protein (167 aa).

The segment at 1-21 (MFDFSFPTPASAGTRMGPASC) is disordered.

This is an uncharacterized protein from Homo sapiens (Human).